The primary structure comprises 392 residues: Succinate--CoA ligase [ADP-forming] subunit beta (392 aa).

The region spanning 9–236 is the ATP-grasp domain; it reads KELFAAHGVP…PSAADPLEAK (228 aa). ATP-binding positions include Lys45, 52 to 54, Val94, and Glu99; that span reads GRG. Positions 191 and 205 each coordinate Mg(2+). Substrate contacts are provided by residues Asn256 and 318 to 320; that span reads GIT.

It belongs to the succinate/malate CoA ligase beta subunit family. Heterotetramer of two alpha and two beta subunits. It depends on Mg(2+) as a cofactor.

The catalysed reaction is succinate + ATP + CoA = succinyl-CoA + ADP + phosphate. It catalyses the reaction GTP + succinate + CoA = succinyl-CoA + GDP + phosphate. Its pathway is carbohydrate metabolism; tricarboxylic acid cycle; succinate from succinyl-CoA (ligase route): step 1/1. Functionally, succinyl-CoA synthetase functions in the citric acid cycle (TCA), coupling the hydrolysis of succinyl-CoA to the synthesis of either ATP or GTP and thus represents the only step of substrate-level phosphorylation in the TCA. The beta subunit provides nucleotide specificity of the enzyme and binds the substrate succinate, while the binding sites for coenzyme A and phosphate are found in the alpha subunit. In Acidothermus cellulolyticus (strain ATCC 43068 / DSM 8971 / 11B), this protein is Succinate--CoA ligase [ADP-forming] subunit beta.